Reading from the N-terminus, the 828-residue chain is Periplasmic nitrate reductase (828 aa).

A signal peptide (tat-type signal) is located at residues 1–32 (MNLSRRDFMKANAAMAAATAAGLSIPVKNVEA). The 4Fe-4S Mo/W bis-MGD-type domain occupies 37–93 (IKWDKAVCRFCGTGCAVLVGTKDGRVVASQGDPDAEVNRGLNCIKGYFLPKIMYGKD). [4Fe-4S] cluster-binding residues include Cys44, Cys47, Cys51, and Cys79. Residues Lys81, Gln148, Asn173, Cys177, 210 to 217 (WGSNMAEM), 241 to 245 (STFEH), Met371, Gln375, Asn481, 507 to 508 (SD), Lys530, Asp557, and 717 to 726 (TGRVLEHWHT) contribute to the Mo-bis(molybdopterin guanine dinucleotide) site. Residue Phe793 participates in substrate binding. Mo-bis(molybdopterin guanine dinucleotide)-binding residues include Asn801 and Lys818.

Belongs to the prokaryotic molybdopterin-containing oxidoreductase family. NasA/NapA/NarB subfamily. As to quaternary structure, component of the periplasmic nitrate reductase NapAB complex composed of NapA and NapB. Requires [4Fe-4S] cluster as cofactor. The cofactor is Mo-bis(molybdopterin guanine dinucleotide). Post-translationally, predicted to be exported by the Tat system. The position of the signal peptide cleavage has not been experimentally proven.

The protein resides in the periplasm. The catalysed reaction is 2 Fe(II)-[cytochrome] + nitrate + 2 H(+) = 2 Fe(III)-[cytochrome] + nitrite + H2O. In terms of biological role, catalytic subunit of the periplasmic nitrate reductase complex NapAB. Receives electrons from NapB and catalyzes the reduction of nitrate to nitrite. The polypeptide is Periplasmic nitrate reductase (Aggregatibacter actinomycetemcomitans (Actinobacillus actinomycetemcomitans)).